The sequence spans 1279 residues: Botulinum-like toxin eBoNT/J (1279 aa).

Histidine 225 contacts Zn(2+). Glutamate 226 is a catalytic residue. Residues histidine 229 and glutamate 269 each contribute to the Zn(2+) site. Cysteine 424 and cysteine 438 are disulfide-bonded. Positions 435–843 (LSSCIEILED…RLTSLPVFNL (409 aa)) are translocation domain (TD). The tract at residues 476 to 525 (ADTILDSTLSNYDFSKEINFTSTVPIITVEDPLETDEDVPVISEDRTVYV) is belt; not required for channel formation. The tract at residues 860-1080 (IDIQDSEVLN…EVNRLYWKYF (221 aa)) is N-terminus of receptor binding domain (N-RBD). The tract at residues 1081–1279 (EGSYLRDVWG…IPVDEGWKED (199 aa)) is C-terminus of receptor binding domain (C-RBD). The short motif at 1250 to 1253 (SAWY) is the Host ganglioside-binding motif element.

The protein belongs to the peptidase M27 family. Might be a disulfide-linked heterodimer of a light chain (LC) and heavy chain (HC). The cofactor is Zn(2+).

Its subcellular location is the secreted. The protein resides in the host cytoplasm. It is found in the host cytosol. The protein localises to the host cell membrane. It localises to the host cytoplasmic vesicle membrane. The enzyme catalyses Limited hydrolysis of proteins of the neuroexocytosis apparatus, synaptobrevins, SNAP25 or syntaxin. No detected action on small molecule substrates.. Functionally, strongly resembles a botulinum-type toxin, with the appropriate domains and residues to have proteolytic function, although its C-terminus (which binds to a eukaryotic host cell) is different enough from clostrial botulinum toxins that it might bind another cell target. Might be a precursor of a toxin that binds to an unknown eukaryotic cell receptor(s), and be taken up into the host cell via the endocytic pathway. When the pH of the putative toxin-containing endosome drops a structural rearrangement occurs so that the N-terminus of the heavy chain forms pores that allows the light chain to translocate into the cytosol. Once in the cytosol the disulfide bond linking the 2 subunits is reduced and light chain cleaves its target protein. This is Botulinum-like toxin eBoNT/J from Enterococcus sp. (strain 3G1_DIV0629).